Here is a 122-residue protein sequence, read N- to C-terminus: Basic phospholipase A2 F15 (122 aa).

7 cysteine pairs are disulfide-bonded: Cys26-Cys115, Cys28-Cys44, Cys43-Cys95, Cys49-Cys122, Cys50-Cys88, Cys57-Cys81, and Cys75-Cys86. Residues Tyr27, Gly29, and Gly31 each coordinate Ca(2+). The active site involves His47. Asp48 contributes to the Ca(2+) binding site. Asp89 is a catalytic residue.

The protein belongs to the phospholipase A2 family. Group II subfamily. D49 sub-subfamily. When this protein is associated with crotapotin (F5 or F7), it forms the crotoxin protein. It depends on Ca(2+) as a cofactor. In terms of tissue distribution, expressed by the venom gland.

It is found in the secreted. It catalyses the reaction a 1,2-diacyl-sn-glycero-3-phosphocholine + H2O = a 1-acyl-sn-glycero-3-phosphocholine + a fatty acid + H(+). Its activity is regulated as follows. Activated by heparin. Inhibited by its chaperone crotapotin. Its function is as follows. Snake venom phospholipase A2 (PLA2) that shows moderate neurotoxic activity in isolated mouse phrenic nerve diaphragm but shows high neurotoxic activity in a chick biventer cervis preparation. Also shows a high bactericidal effect against both Gram-negative and Gram-positive bacteria. PLA2 catalyzes the calcium-dependent hydrolysis of the 2-acyl groups in 3-sn-phosphoglycerides. The sequence is that of Basic phospholipase A2 F15 from Crotalus durissus terrificus (South American rattlesnake).